Consider the following 89-residue polypeptide: Small ribosomal subunit protein uS15 (89 aa).

The protein belongs to the universal ribosomal protein uS15 family. As to quaternary structure, part of the 30S ribosomal subunit. Forms a bridge to the 50S subunit in the 70S ribosome, contacting the 23S rRNA.

One of the primary rRNA binding proteins, it binds directly to 16S rRNA where it helps nucleate assembly of the platform of the 30S subunit by binding and bridging several RNA helices of the 16S rRNA. Functionally, forms an intersubunit bridge (bridge B4) with the 23S rRNA of the 50S subunit in the ribosome. This chain is Small ribosomal subunit protein uS15, found in Actinobacillus pleuropneumoniae serotype 5b (strain L20).